A 311-amino-acid polypeptide reads, in one-letter code: Chalcone synthase 4 (311 aa).

Cys164 is a catalytic residue.

It belongs to the thiolase-like superfamily. Chalcone/stilbene synthases family.

It catalyses the reaction (E)-4-coumaroyl-CoA + 3 malonyl-CoA + 3 H(+) = 2',4,4',6'-tetrahydroxychalcone + 3 CO2 + 4 CoA. The protein operates within secondary metabolite biosynthesis; flavonoid biosynthesis. The primary product of this enzyme is 4,2',4',6'-tetrahydroxychalcone (also termed naringenin-chalcone or chalcone) which can under specific conditions spontaneously isomerize into naringenin. The chain is Chalcone synthase 4 (CHS4) from Trifolium subterraneum (Subterranean clover).